Here is a 317-residue protein sequence, read N- to C-terminus: tRNA dimethylallyltransferase (317 aa).

14 to 21 (GPTAVGKT) contacts ATP. Residue 16 to 21 (TAVGKT) participates in substrate binding. Positions 39–42 (DSMQ) are interaction with substrate tRNA.

This sequence belongs to the IPP transferase family. Monomer. The cofactor is Mg(2+).

The catalysed reaction is adenosine(37) in tRNA + dimethylallyl diphosphate = N(6)-dimethylallyladenosine(37) in tRNA + diphosphate. Functionally, catalyzes the transfer of a dimethylallyl group onto the adenine at position 37 in tRNAs that read codons beginning with uridine, leading to the formation of N6-(dimethylallyl)adenosine (i(6)A). The protein is tRNA dimethylallyltransferase of Bacillus cereus (strain G9842).